Consider the following 551-residue polypeptide: Colicin-E6 (551 aa).

Disordered stretches follow at residues 1–74 (MSGG…SGGG), 244–269 (LSPGVTNNTDKDVRPAGFTQGGNTRD), 293–317 (PDQVKQRQDEENRRQQEWDATHPVE), 406–501 (NKQA…WYGD), and 517–551 (EGYRASDGQHLGSFEPKTGNQLKGPDPKRNIKKYL). The span at 20-35 (INGGPTGLGVGGGASD) shows a compositional bias: gly residues. Over residues 36-45 (GSGWSSENNP) the composition is skewed to low complexity. The segment covering 46 to 74 (WGGGSGSGIHWGGGSGHGNGGGNGNSGGG) has biased composition (gly residues). 2 stretches are compositionally biased toward basic and acidic residues: residues 296 to 317 (VKQRQDEENRRQQEWDATHPVE) and 430 to 484 (ESRK…EGKP). The ribosome inactivating activity stretch occupies residues 455–551 (KGVKDYGHDY…DPKRNIKKYL (97 aa)). The segment at 530–551 (FEPKTGNQLKGPDPKRNIKKYL) is binding of immunity protein.

The protein belongs to the cloacin colicin family.

Functionally, inactivates ribosomes by hydrolyzing 16S RNA in 30S ribosomes at a specific site. In terms of biological role, colicins are polypeptide toxins produced by and active against E.coli and closely related bacteria. The chain is Colicin-E6 from Escherichia coli.